Consider the following 92-residue polypeptide: UPF0223 protein SPy_1248/M5005_Spy0958 (92 aa).

It belongs to the UPF0223 family.

The protein is UPF0223 protein SPy_1248/M5005_Spy0958 of Streptococcus pyogenes serotype M1.